Consider the following 202-residue polypeptide: tRNA (guanine-N(7)-)-methyltransferase (202 aa).

S-adenosyl-L-methionine-binding residues include Glu34, Glu59, Asp86, and Asp107. Asp107 is an active-site residue. Substrate is bound by residues Lys111, Asp143, and 181–184 (TDYE).

The protein belongs to the class I-like SAM-binding methyltransferase superfamily. TrmB family.

The enzyme catalyses guanosine(46) in tRNA + S-adenosyl-L-methionine = N(7)-methylguanosine(46) in tRNA + S-adenosyl-L-homocysteine. The protein operates within tRNA modification; N(7)-methylguanine-tRNA biosynthesis. Its function is as follows. Catalyzes the formation of N(7)-methylguanine at position 46 (m7G46) in tRNA. The protein is tRNA (guanine-N(7)-)-methyltransferase of Metamycoplasma hominis (strain ATCC 23114 / DSM 25592 / NBRC 14850 / NCTC 10111 / PG21) (Mycoplasma hominis).